The primary structure comprises 144 residues: Putative pre-16S rRNA nuclease (144 aa).

This sequence belongs to the YqgF nuclease family.

The protein localises to the cytoplasm. Functionally, could be a nuclease involved in processing of the 5'-end of pre-16S rRNA. The chain is Putative pre-16S rRNA nuclease from Picosynechococcus sp. (strain ATCC 27264 / PCC 7002 / PR-6) (Agmenellum quadruplicatum).